A 351-amino-acid chain; its full sequence is Biotin synthase (351 aa).

Positions N44–Q262 constitute a Radical SAM core domain. 3 residues coordinate [4Fe-4S] cluster: C59, C63, and C66. 4 residues coordinate [2Fe-2S] cluster: C103, C134, C194, and R266.

Belongs to the radical SAM superfamily. Biotin synthase family. Homodimer. [4Fe-4S] cluster serves as cofactor. Requires [2Fe-2S] cluster as cofactor.

The enzyme catalyses (4R,5S)-dethiobiotin + (sulfur carrier)-SH + 2 reduced [2Fe-2S]-[ferredoxin] + 2 S-adenosyl-L-methionine = (sulfur carrier)-H + biotin + 2 5'-deoxyadenosine + 2 L-methionine + 2 oxidized [2Fe-2S]-[ferredoxin]. Its pathway is cofactor biosynthesis; biotin biosynthesis; biotin from 7,8-diaminononanoate: step 2/2. Functionally, catalyzes the conversion of dethiobiotin (DTB) to biotin by the insertion of a sulfur atom into dethiobiotin via a radical-based mechanism. This chain is Biotin synthase, found in Pseudomonas fluorescens (strain ATCC BAA-477 / NRRL B-23932 / Pf-5).